We begin with the raw amino-acid sequence, 401 residues long: Bifunctional sugar-1-phosphate nucleotidylyltransferase/acetyltransferase (401 aa).

The segment at 1–220 (MKAFILAAGS…KPWNIIDVNK (220 aa)) is nucleotidylyltransferase. Residues 8–13 (AGSGER), Gln73, and Gly79 contribute to the a ribonucleoside 5'-triphosphate site. 5 residues coordinate N-acetyl-alpha-D-glucosamine 1-phosphate: Thr80, Tyr97, Gly131, Glu146, and Asn157. The tract at residues 236–401 (EDNVKIKGKV…DVGYGEFFKV (166 aa)) is acetyltransferase.

The protein in the N-terminal section; belongs to the N-acetylglucosamine-1-phosphate uridyltransferase family. This sequence in the C-terminal section; belongs to the transferase hexapeptide repeat family. As to quaternary structure, homotrimer. The cofactor is Co(2+). Mn(2+) is required as a cofactor.

It catalyses the reaction dTTP + alpha-D-glucose 1-phosphate + H(+) = dTDP-alpha-D-glucose + diphosphate. The enzyme catalyses alpha-D-glucose 1-phosphate + UTP + H(+) = UDP-alpha-D-glucose + diphosphate. It carries out the reaction N-acetyl-alpha-D-galactosamine 1-phosphate + UTP + H(+) = UDP-N-acetyl-alpha-D-galactosamine + diphosphate. The catalysed reaction is N-acetyl-alpha-D-glucosamine 1-phosphate + UTP + H(+) = UDP-N-acetyl-alpha-D-glucosamine + diphosphate. It catalyses the reaction alpha-D-galactosamine 1-phosphate + acetyl-CoA = N-acetyl-alpha-D-galactosamine 1-phosphate + CoA + H(+). The enzyme catalyses alpha-D-glucosamine 1-phosphate + acetyl-CoA = N-acetyl-alpha-D-glucosamine 1-phosphate + CoA + H(+). Its pathway is nucleotide-sugar biosynthesis; UDP-N-acetyl-alpha-D-glucosamine biosynthesis; N-acetyl-alpha-D-glucosamine 1-phosphate from alpha-D-glucosamine 6-phosphate (route II): step 2/2. The protein operates within nucleotide-sugar biosynthesis; UDP-N-acetyl-alpha-D-glucosamine biosynthesis; UDP-N-acetyl-alpha-D-glucosamine from N-acetyl-alpha-D-glucosamine 1-phosphate: step 1/1. With respect to regulation, glcN-1-P acetyltransferase activity is inhibited by divalent cations. GalN-1-P acetyltransferase activity is enhanced by Co(2+), Mg(2+) and Ca(2+), but inhibited by Zn(2+) or Mn(2+). Bifunctional enzyme involved in the synthesis of UDP-N-acetylglucosamine (UDP-GlcNAc) and UDP-N-acetylgalactosamine (UDP-GalNAc). It has multiple amino-sugar-1-phosphate acetyltransferase activities, including glucosamine-1-phosphate (GlcN-1-P) acetyltransferase and galactosamine-1-phosphate (GalN-1-P) acetyltransferase activities, and multiple sugar-1-phosphate nucleotidylyltransferase activities, including N-acetylglucosamine-1-phosphate (GlcNAc-1-P) uridyltransferase and N-acetylgalactosamine-1-phosphate (GalNAc-1-P) uridyltransferase activities. Also catalyzes the formation of dTDP-glucose from dTTP and glucose-1-phosphate (Glc-1-P), and the reverse reaction, which produces dTTP from dTDP-glucose and diphosphate. Can also catalyze the formation of UDP-glucose from UTP and glucose-1-phosphate. The sequence is that of Bifunctional sugar-1-phosphate nucleotidylyltransferase/acetyltransferase from Sulfurisphaera tokodaii (strain DSM 16993 / JCM 10545 / NBRC 100140 / 7) (Sulfolobus tokodaii).